The following is a 358-amino-acid chain: Putative inhibitor of apoptosis (358 aa).

BIR repeat units follow at residues 4 to 70 (EKDR…CPFL) and 90 to 157 (YAAR…CEYL). Positions 127, 130, 147, and 154 each coordinate Zn(2+). The 91-residue stretch at 193-283 (EPPNDLSLIR…MLYKHLFVQQ (91 aa)) folds into the CARD domain. The RING-type zinc finger occupies 311-346 (CKVCMDKEVSIVFIPCGHLVVCKDCAPSLRKCPICR).

It belongs to the IAP family.

This is Putative inhibitor of apoptosis (PIAP) from Sus scrofa (Pig).